Consider the following 376-residue polypeptide: 2-aminoethylphosphonate--pyruvate transaminase 2 (376 aa).

Lys-194 carries the N6-(pyridoxal phosphate)lysine modification.

The protein belongs to the class-V pyridoxal-phosphate-dependent aminotransferase family. PhnW subfamily. Homodimer. Requires pyridoxal 5'-phosphate as cofactor.

The enzyme catalyses (2-aminoethyl)phosphonate + pyruvate = phosphonoacetaldehyde + L-alanine. In terms of biological role, involved in phosphonate degradation. The protein is 2-aminoethylphosphonate--pyruvate transaminase 2 of Burkholderia lata (strain ATCC 17760 / DSM 23089 / LMG 22485 / NCIMB 9086 / R18194 / 383).